The primary structure comprises 67 residues: Mu-conotoxin TsIIIA (67 aa).

Positions 1-20 (MMSKLGVLLTICLLLFPLTA) are cleaved as a signal peptide. A propeptide spanning residues 21–48 (VPLDGDQPADQPAERKQNEQHPLFDQKR) is cleaved from the precursor. Disulfide bonds link Cys50–Cys59, Cys51–Cys64, and Cys55–Cys65.

The protein belongs to the conotoxin M superfamily. In terms of tissue distribution, expressed by the venom duct.

Its subcellular location is the secreted. Its function is as follows. Mu-conotoxins block voltage-gated sodium channels (Nav). This toxin specifically inhibits mammalian Nav1.8/SCN10A sodium currents (IC(50)=2.11 uM) without inducing a shift in the current-voltage relationship of this channel. In vivo, shows potent analgesic activity in a mice hotplate analgesic assay. In addition, this toxin has better analgesic effects than Ziconotide, an analgesic drug. This chain is Mu-conotoxin TsIIIA, found in Conus tessulatus (Tessellate cone).